Here is a 239-residue protein sequence, read N- to C-terminus: Pyridoxine 5'-phosphate synthase (239 aa).

Residue N7 coordinates 3-amino-2-oxopropyl phosphate. 9–10 (DH) serves as a coordination point for 1-deoxy-D-xylulose 5-phosphate. R18 contributes to the 3-amino-2-oxopropyl phosphate binding site. H43 serves as the catalytic Proton acceptor. The 1-deoxy-D-xylulose 5-phosphate site is built by R45 and H50. The active-site Proton acceptor is E70. Position 100 (T100) interacts with 1-deoxy-D-xylulose 5-phosphate. H191 (proton donor) is an active-site residue. Residues G192 and 213 to 214 (GH) each bind 3-amino-2-oxopropyl phosphate.

The protein belongs to the PNP synthase family. As to quaternary structure, homooctamer; tetramer of dimers.

The protein resides in the cytoplasm. The enzyme catalyses 3-amino-2-oxopropyl phosphate + 1-deoxy-D-xylulose 5-phosphate = pyridoxine 5'-phosphate + phosphate + 2 H2O + H(+). It functions in the pathway cofactor biosynthesis; pyridoxine 5'-phosphate biosynthesis; pyridoxine 5'-phosphate from D-erythrose 4-phosphate: step 5/5. In terms of biological role, catalyzes the complicated ring closure reaction between the two acyclic compounds 1-deoxy-D-xylulose-5-phosphate (DXP) and 3-amino-2-oxopropyl phosphate (1-amino-acetone-3-phosphate or AAP) to form pyridoxine 5'-phosphate (PNP) and inorganic phosphate. This is Pyridoxine 5'-phosphate synthase from Geobacter metallireducens (strain ATCC 53774 / DSM 7210 / GS-15).